Reading from the N-terminus, the 227-residue chain is MKKAVMLVSGGADSATVLAMAREIGYEIHSMSFNYGQRNNAELRKVKELIKEYNVKQHKIVDIDLRAFGGSALTDDNIDVPHYHDVNAVPEDVPVTYVPSRNTIFLSYALGYAEVIGAKDIFIGVHTSDSANYPDCRPEYIKSFEKMANLATSIGIQGQKITIHTPLIDMTKEQIIRTGLKLGVDYKNTISCYEPTEDDSSCGNCLACMIRLDAFKKNNIQDPIKYV.

8–18 (VSGGADSATVL) lines the ATP pocket. Zn(2+) contacts are provided by C192, C202, C205, and C208.

This sequence belongs to the QueC family. It depends on Zn(2+) as a cofactor.

It catalyses the reaction 7-carboxy-7-deazaguanine + NH4(+) + ATP = 7-cyano-7-deazaguanine + ADP + phosphate + H2O + H(+). It functions in the pathway purine metabolism; 7-cyano-7-deazaguanine biosynthesis. Its function is as follows. Catalyzes the ATP-dependent conversion of 7-carboxy-7-deazaguanine (CDG) to 7-cyano-7-deazaguanine (preQ(0)). The chain is 7-cyano-7-deazaguanine synthase from Rickettsia akari (strain Hartford).